We begin with the raw amino-acid sequence, 309 residues long: Probable pyridoxal 5'-phosphate synthase subunit PDX1 (309 aa).

Residue Asp-40 coordinates D-ribose 5-phosphate. Lys-97 acts as the Schiff-base intermediate with D-ribose 5-phosphate in catalysis. Gly-169 lines the D-ribose 5-phosphate pocket. Arg-181 provides a ligand contact to D-glyceraldehyde 3-phosphate. Residues Gly-230 and 251-252 (GS) each bind D-ribose 5-phosphate.

This sequence belongs to the PdxS/SNZ family.

The catalysed reaction is aldehydo-D-ribose 5-phosphate + D-glyceraldehyde 3-phosphate + L-glutamine = pyridoxal 5'-phosphate + L-glutamate + phosphate + 3 H2O + H(+). It participates in cofactor biosynthesis; pyridoxal 5'-phosphate biosynthesis. Catalyzes the formation of pyridoxal 5'-phosphate from ribose 5-phosphate (RBP), glyceraldehyde 3-phosphate (G3P) and ammonia. The ammonia is provided by PDX2. Can also use ribulose 5-phosphate and dihydroxyacetone phosphate as substrates, resulting from enzyme-catalyzed isomerization of RBP and G3P, respectively. Also plays an indirect role in resistance to singlet oxygen-generating photosensitizers. The polypeptide is Probable pyridoxal 5'-phosphate synthase subunit PDX1 (PDX1) (Ginkgo biloba (Ginkgo)).